The primary structure comprises 542 residues: MANDITTTAAWQSLTERYEAFQGTTLRELFQDGGRAEKLSFDAAGLRVDLSKNLLDDAILTDLVALAEQAGLTDRIEAMFRGEHINNTEDRAVLHTALRLPVEESLEVDGQDVAADVHEVLGRMRDFATALRSGAWLGYTGRTIKKVVNIGIGGSDLGPAMATKALRAYATAGITAEFVSNVDPADMVSVLEDLDAESTLFVIASKTFTTQETLANANAAKNWLIEQLGSEEAVSKHFVAVSTNAEKVTAFGINPENMFGFWDWVGGRYSVDSAVGLSLMAVIGPRDFMRFLGGFRAMDEHFRYTDFGQNVPVLMALLSVWYTDFFGAETHAVLPYSEDLSRFAAYLQQLTMESNGKSVRRDGSPVTTGTGEIYWGEPGTNGQHAFFQLIHQGTRLIPADFIGFARPKQDLPAGEKSMHDLLMSNFFAQTKVLAFGKTAEEIAAEGVDDNLINHKVMPGNRPTTTILAEELTPAVLGALIALYEHIVFVQGVIWDINSFDQWGVELGKQQASDLAPAVSGEVEVDSGDSSTDALIRWYRTNR.

Catalysis depends on Glu353, which acts as the Proton donor. Active-site residues include His384 and Lys508.

Belongs to the GPI family.

It is found in the cytoplasm. The enzyme catalyses alpha-D-glucose 6-phosphate = beta-D-fructose 6-phosphate. The protein operates within carbohydrate biosynthesis; gluconeogenesis. Its pathway is carbohydrate degradation; glycolysis; D-glyceraldehyde 3-phosphate and glycerone phosphate from D-glucose: step 2/4. In terms of biological role, catalyzes the reversible isomerization of glucose-6-phosphate to fructose-6-phosphate. The sequence is that of Glucose-6-phosphate isomerase from Corynebacterium efficiens (strain DSM 44549 / YS-314 / AJ 12310 / JCM 11189 / NBRC 100395).